The primary structure comprises 622 residues: MRKLYCVLLLSAFEFTYMINFGRGQNYWEHPYQNSNVYHPINEHREHPKEYQYPLHQEHTYQQEDSGEDENTLQHAYPIDHEGAEPAPQEQNLFSSIEIVERSNYMGNPWTEYMAKYDIEEVHGSGIRVDLGEDAEVAGTQYRLPSGKCPVFGKGIIIENSNTTFLKPVATGNQDLKDGGFAFPPTEPLISPMTLNGMRDFYKNNEYVKNLDELTLCSRHAGNMNPDKDENSNYKYPAVYDDKDKKCHILYIAAQENNGPRYCNKDESKRNSMFCFRPAKDKSFQNYTYLSKNVVDNWEKVCPRKNLENAKFGLWVDGNCEDIPHVNEFSANDLFECNKLVFELSASDQPKQYEQHLTDYEKIKEGFKNKNASMIKSAFLPTGAFKADRYKSHGKGYNWGNYNRKTHKCEIFNVKPTCLINNSSYIATTALSHPIEVENNFPCSLYKNEIMKEIERESKRIKLNDNDDEGNKKIIAPRIFISDDKDSLKCPCDPEMVSNSTCRFFVCKCVERRAEVTSNNEVVVKEEYKDEYADIPEHKPTYDNMKIIIASSAAVAVLATILMVYLYKRKGNAEKYDKMDQPQDYGKSTSRNDEMLDPEASFWGEEKRASHTTPVLMEKPYY.

Residues 1–24 (MRKLYCVLLLSAFEFTYMINFGRG) form the signal peptide. The Extracellular portion of the chain corresponds to 25 to 546 (QNYWEHPYQN…EHKPTYDNMK (522 aa)). Cystine bridges form between C149/C302, C217/C247, C263/C275, C320/C418, and C337/C409. N162 is a glycosylation site (N-linked (GlcNAc...) asparagine). Residues N286, N371, N421, N422, and N499 are each glycosylated (N-linked (GlcNAc...) asparagine). 3 cysteine pairs are disulfide-bonded: C443–C502, C490–C507, and C492–C509. The chain crosses the membrane as a helical span at residues 547–567 (IIIASSAAVAVLATILMVYLY). The Cytoplasmic segment spans residues 568 to 622 (KRKGNAEKYDKMDQPQDYGKSTSRNDEMLDPEASFWGEEKRASHTTPVLMEKPYY). Residues 577 to 607 (DKMDQPQDYGKSTSRNDEMLDPEASFWGEEK) form a disordered region.

Belongs to the apicomplexan parasites AMA1 family.

The protein localises to the membrane. Involved in parasite invasion of erythrocytes. In Plasmodium falciparum (isolate Camp / Malaysia), this protein is Apical membrane antigen 1 (AMA-1).